Consider the following 203-residue polypeptide: Outer-membrane lipoprotein LolB (203 aa).

A signal peptide spans 1-21; it reads MRLSASLFHIALVTVLLVLAG. A lipid anchor (N-palmitoyl cysteine) is attached at Cys-22. Cys-22 carries S-diacylglycerol cysteine lipidation.

Belongs to the LolB family. In terms of assembly, monomer.

The protein localises to the cell outer membrane. In terms of biological role, plays a critical role in the incorporation of lipoproteins in the outer membrane after they are released by the LolA protein. The sequence is that of Outer-membrane lipoprotein LolB from Shewanella frigidimarina (strain NCIMB 400).